Here is a 361-residue protein sequence, read N- to C-terminus: Chorismate synthase (361 aa).

R47 is an NADP(+) binding site. Residues 124 to 126, G286, 301 to 305, and R327 each bind FMN; these read RAS and KPTAT.

The protein belongs to the chorismate synthase family. Homotetramer. Requires FMNH2 as cofactor.

It carries out the reaction 5-O-(1-carboxyvinyl)-3-phosphoshikimate = chorismate + phosphate. It functions in the pathway metabolic intermediate biosynthesis; chorismate biosynthesis; chorismate from D-erythrose 4-phosphate and phosphoenolpyruvate: step 7/7. Functionally, catalyzes the anti-1,4-elimination of the C-3 phosphate and the C-6 proR hydrogen from 5-enolpyruvylshikimate-3-phosphate (EPSP) to yield chorismate, which is the branch point compound that serves as the starting substrate for the three terminal pathways of aromatic amino acid biosynthesis. This reaction introduces a second double bond into the aromatic ring system. The protein is Chorismate synthase of Prochlorococcus marinus (strain NATL1A).